Here is a 151-residue protein sequence, read N- to C-terminus: U-scoloptoxin(17)-Er2a (151 aa).

The first 22 residues, Met1–Ala22, serve as a signal peptide directing secretion.

Belongs to the scoloptoxin-17 family. Post-translationally, contains 5 disulfide bonds. Expressed by the venom gland.

The protein resides in the secreted. The sequence is that of U-scoloptoxin(17)-Er2a from Ethmostigmus rubripes (Giant centipede).